Consider the following 419-residue polypeptide: Enolase (419 aa).

(2R)-2-phosphoglycerate is bound at residue Gln-161. Glu-205 serves as the catalytic Proton donor. Asp-240, Glu-283, and Asp-309 together coordinate Mg(2+). (2R)-2-phosphoglycerate is bound by residues Lys-334, Arg-363, Ser-364, and Lys-385. The Proton acceptor role is filled by Lys-334.

Belongs to the enolase family. Mg(2+) serves as cofactor.

It localises to the cytoplasm. It is found in the secreted. The protein localises to the cell surface. The catalysed reaction is (2R)-2-phosphoglycerate = phosphoenolpyruvate + H2O. It functions in the pathway carbohydrate degradation; glycolysis; pyruvate from D-glyceraldehyde 3-phosphate: step 4/5. Its function is as follows. Catalyzes the reversible conversion of 2-phosphoglycerate (2-PG) into phosphoenolpyruvate (PEP). It is essential for the degradation of carbohydrates via glycolysis. In Saccharolobus islandicus (strain Y.G.57.14 / Yellowstone #1) (Sulfolobus islandicus), this protein is Enolase.